A 445-amino-acid polypeptide reads, in one-letter code: Tubulin beta-3 chain (445 aa).

GTP is bound by residues Gln11, Glu69, Ser138, Gly142, Thr143, Gly144, Asn204, and Asn226. A Mg(2+)-binding site is contributed by Glu69. Positions 425–445 are disordered; the sequence is YQDATAEEYDEEEQDGEEEHD. Over residues 429–445 the composition is skewed to acidic residues; sequence TAEEYDEEEQDGEEEHD.

The protein belongs to the tubulin family. In terms of assembly, dimer of alpha and beta chains. A typical microtubule is a hollow water-filled tube with an outer diameter of 25 nm and an inner diameter of 15 nM. Alpha-beta heterodimers associate head-to-tail to form protofilaments running lengthwise along the microtubule wall with the beta-tubulin subunit facing the microtubule plus end conferring a structural polarity. Microtubules usually have 13 protofilaments but different protofilament numbers can be found in some organisms and specialized cells. Requires Mg(2+) as cofactor.

The protein localises to the cytoplasm. It is found in the cytoskeleton. Functionally, tubulin is the major constituent of microtubules, a cylinder consisting of laterally associated linear protofilaments composed of alpha- and beta-tubulin heterodimers. Microtubules grow by the addition of GTP-tubulin dimers to the microtubule end, where a stabilizing cap forms. Below the cap, tubulin dimers are in GDP-bound state, owing to GTPase activity of alpha-tubulin. The protein is Tubulin beta-3 chain (TUBB3) of Zea mays (Maize).